Here is a 265-residue protein sequence, read N- to C-terminus: Type III pantothenate kinase (265 aa).

6–13 (DVGNTNIV) contributes to the ATP binding site. 112 to 115 (GADR) is a substrate binding site. The active-site Proton acceptor is the Asp114. Asp134 contacts K(+). Thr137 lines the ATP pocket. Thr189 is a substrate binding site.

It belongs to the type III pantothenate kinase family. Homodimer. Requires NH4(+) as cofactor. K(+) is required as a cofactor.

The protein localises to the cytoplasm. The catalysed reaction is (R)-pantothenate + ATP = (R)-4'-phosphopantothenate + ADP + H(+). The protein operates within cofactor biosynthesis; coenzyme A biosynthesis; CoA from (R)-pantothenate: step 1/5. In terms of biological role, catalyzes the phosphorylation of pantothenate (Pan), the first step in CoA biosynthesis. In Saccharopolyspora erythraea (strain ATCC 11635 / DSM 40517 / JCM 4748 / NBRC 13426 / NCIMB 8594 / NRRL 2338), this protein is Type III pantothenate kinase.